Here is a 265-residue protein sequence, read N- to C-terminus: Polyglutamine-binding protein 1 (265 aa).

The 35-residue stretch at 46–80 folds into the WW domain; the sequence is EGLPPSWYKVFDPSCGLPYYWNADTDLVSWLSPHD. At S94 the chain carries Phosphoserine. A disordered region spans residues 94–265; that stretch reads SSNADAEEKL…AEASRTKQQD (172 aa). Basic and acidic residues predominate over residues 99–175; the sequence is AEEKLDRSHD…DKADREEGKE (77 aa). 15 consecutive repeat copies span residues 104–110, 111–117, 118–124, 125–131, 132–138, 139–140, 141–142, 143–144, 150–151, 152–153, 154–155, 156–157, 158–159, 160–161, and 162–163. Residues 104–138 are 5 X 7 AA approximate tandem repeats of D-R-[SG]-H-D-K-S; the sequence is DRSHDKSDRGHDKSDRSHEKLDRGHDKSDRGHDKS. The segment at 139-144 is 3 X 2 AA tandem repeats of [DE]-R; sequence DRDRER. The interval 150–163 is 7 X 2 AA tandem repeats of [DE]-R; the sequence is DRERERDRERDRDR. The segment at 245 to 255 is important for interaction with TXNL4A; sequence YPSPGAVLRAN. S247 bears the Phosphoserine mark.

As to quaternary structure, interacts with POU3F2/Brn-2, ATXN1, TXNL4A, HTT and AR. Interaction with ATXN1 correlates positively with the length of the polyglutamine tract. Interacts with RNA polymerase II large subunit in a phosphorylation-dependent manner. Forms a ternary complex with ATXN1 mutant and phosphorylated RNA polymerase II. Interacts (via C-terminus) with TXNL4A and CD2BP2. Interacts (via WW domain) with ATN1 and SF3B1, and may interact with additional splice factors. Interacts (via WW domain) with WBP11; Leading to reduce interaction between PQBP1 and TXNL4A. Interacts with CAPRIN1. Interacts with DDX1. Interacts with SFPQ. Interacts with KHSRP.

The protein localises to the nucleus. It is found in the nucleus speckle. Its subcellular location is the cytoplasmic granule. Its function is as follows. Intrinsically disordered protein that acts as a scaffold, and which is involved in different processes, such as pre-mRNA splicing, transcription regulation, innate immunity and neuron development. Interacts with splicing-related factors via the intrinsically disordered region and regulates alternative splicing of target pre-mRNA species. May suppress the ability of POU3F2 to transactivate the DRD1 gene in a POU3F2 dependent manner. Can activate transcription directly or via association with the transcription machinery. May be involved in ATXN1 mutant-induced cell death. The interaction with ATXN1 mutant reduces levels of phosphorylated RNA polymerase II large subunit. Involved in the assembly of cytoplasmic stress granule, possibly by participating in the transport of neuronal RNA granules. Also acts as an innate immune sensor of infection by retroviruses, by detecting the presence of reverse-transcribed DNA in the cytosol. Directly binds retroviral reverse-transcribed DNA in the cytosol and interacts with CGAS, leading to activate the cGAS-STING signaling pathway, triggering type-I interferon production. This Gorilla gorilla gorilla (Western lowland gorilla) protein is Polyglutamine-binding protein 1 (PQBP1).